The chain runs to 643 residues: Threonine--tRNA ligase (643 aa).

Residues 1 to 61 (MIKVTLKDGS…KEDVSLSICT (61 aa)) form the TGS domain. Residues 240-540 (DHNKLGRELK…LIEKYAGAFP (301 aa)) form a catalytic region. Cys335, His386, and His517 together coordinate Zn(2+).

Belongs to the class-II aminoacyl-tRNA synthetase family. As to quaternary structure, homodimer. Zn(2+) serves as cofactor.

The protein localises to the cytoplasm. It carries out the reaction tRNA(Thr) + L-threonine + ATP = L-threonyl-tRNA(Thr) + AMP + diphosphate + H(+). Functionally, catalyzes the attachment of threonine to tRNA(Thr) in a two-step reaction: L-threonine is first activated by ATP to form Thr-AMP and then transferred to the acceptor end of tRNA(Thr). Also edits incorrectly charged L-seryl-tRNA(Thr). This is Threonine--tRNA ligase from Clostridium botulinum (strain Eklund 17B / Type B).